The primary structure comprises 862 residues: Ecdysone-induced protein 78C (862 aa).

Disordered stretches follow at residues 28–83, 97–138, 173–210, and 230–353; these read SSEQ…EEAL, LHFF…KQHH, ASLSPQQQQQRQHTHQQQQQQQQQQQHPGQQQHQLNCT, and ASNH…NNNN. Residues 37 to 46 show a composition bias toward basic and acidic residues; the sequence is KQEDLIKDFT. Residues 47–82 show a composition bias toward acidic residues; the sequence is RDEEEQPSEEEAEEEDNEEDEEEEGEEEEEDEDEEA. The span at 105 to 119 shows a compositional bias: polar residues; sequence DSSTQGAYSEANSLE. 4 stretches are compositionally biased toward low complexity: residues 173–206, 230–291, 308–335, and 342–353; these read ASLSPQQQQQRQHTHQQQQQQQQQQQHPGQQQHQ, ASNH…NNSV, QQQQPLPTTQLQQQQQHQQQLQHPQQQQ, and SSSSNGSSNNNN. A DNA-binding region (nuclear receptor) is located at residues 360–435; it reads FVPCKVCGDK…AGMSRDSVRY (76 aa). NR C4-type zinc fingers lie at residues 363–383 and 399–418; these read CKVCGDKASGYHYGVTSCEGC and CLRDGKCLVIRLNRNRCQYC. Residues 444–557 are disordered; sequence ELNGAAASSA…NNNSSSGNAS (114 aa). Residues 447–460 show a composition bias toward low complexity; sequence GAAASSAAAGAPAS. A compositionally biased stretch (polar residues) spans 463–472; it reads VDDSTSSTLH. Residues 475–508 show a composition bias toward low complexity; it reads HLQQQQQQHLLQQQQQQQHQPQLQQHHQLQQQPH. Residues 516–533 show a composition bias toward polar residues; that stretch reads TPSTPQTPQMCSIASSPS. A compositionally biased stretch (low complexity) spans 539–555; that stretch reads NSANNNNNNNNNSSSGN. One can recognise an NR LBD domain in the interval 626 to 855; it reads YTEELTRELM…PPLFAEIFDI (230 aa).

This sequence belongs to the nuclear hormone receptor family. NR1 subfamily.

It localises to the nucleus. Its function is as follows. Induces the early late puff 78C which triggers puparium formation and development. In Drosophila melanogaster (Fruit fly), this protein is Ecdysone-induced protein 78C (Eip78C).